The primary structure comprises 62 residues: Large ribosomal subunit protein bL28 (62 aa).

The protein belongs to the bacterial ribosomal protein bL28 family.

This chain is Large ribosomal subunit protein bL28, found in Helicobacter pylori (strain P12).